A 606-amino-acid chain; its full sequence is MNIKASRIKELETLCKNIREEILRVVSKNGGHLSSTLGATEIIVAMHEVFDSKKDPFIFDVSHQSYAHKLLTGRWDKFDTLREFNGLCGYTKPSESEHDYFVAGHSSTSISLGVGAAKAIALKGEQNSRIPVIMIGDGSMTAGMVYEALNELGERKYPMVIILNDNEMSISKPIGAISRILSSAMASPFYQNFKKHTENFVDNFGDGARYIAKRMEESLKLITPGIMFEEMGIDYIGPVDGHNIASLIEILQKAKELKKPVIVHAQTLKGKGYEIAEGKDEKWHGVGPFDLDSGAASKKSSAKSATQIYAEALLHLAKNNDKIVGATAAMPSGTGLSELIELYPNRFWDVAIAEQHAVTSMAALAKEGFKPFCTIYSTFLQRGYDQVIHDTCLMNLPVVFALDRAGIVGEDGETHQGVFDVSFLRAIPNMTLFAPRDEKSFHQAMAFAAQYQFPCSLRYPRGSFTQTSLPESSPFELAKSQLLQSNKGDVLFIGYGNGVGRAYETSKLLEEKISILDLRFIKPLDKEMLRDMATKHNKWFIFSDSAKMGGVGSAILEFFADEKILHVELESFEYEDSFITHGKTKDVEESLGLLPAQLAQKVKALI.

Residues H63 and 104–106 (GHS) each bind thiamine diphosphate. D137 is a Mg(2+) binding site. Thiamine diphosphate is bound by residues 138-139 (GS), N166, Y273, and E354. N166 serves as a coordination point for Mg(2+).

Belongs to the transketolase family. DXPS subfamily. As to quaternary structure, homodimer. Mg(2+) is required as a cofactor. It depends on thiamine diphosphate as a cofactor.

The catalysed reaction is D-glyceraldehyde 3-phosphate + pyruvate + H(+) = 1-deoxy-D-xylulose 5-phosphate + CO2. It participates in metabolic intermediate biosynthesis; 1-deoxy-D-xylulose 5-phosphate biosynthesis; 1-deoxy-D-xylulose 5-phosphate from D-glyceraldehyde 3-phosphate and pyruvate: step 1/1. In terms of biological role, catalyzes the acyloin condensation reaction between C atoms 2 and 3 of pyruvate and glyceraldehyde 3-phosphate to yield 1-deoxy-D-xylulose-5-phosphate (DXP). This Sulfurimonas denitrificans (strain ATCC 33889 / DSM 1251) (Thiomicrospira denitrificans (strain ATCC 33889 / DSM 1251)) protein is 1-deoxy-D-xylulose-5-phosphate synthase.